A 152-amino-acid chain; its full sequence is Snaclec coagulation factor IX/factor X-binding protein subunit A (152 aa).

The signal sequence occupies residues 1–23 (MGRFIFVSFGLLVVAASLSGTGA). Cystine bridges form between Cys25-Cys36, Cys53-Cys150, and Cys125-Cys142. Residues 32-151 (YEGHCYKAFE…CGQRIPFVCE (120 aa)) enclose the C-type lectin domain. Positions 64, 66, and 70 each coordinate Ca(2+). Position 151 (Glu151) interacts with Ca(2+).

The protein belongs to the snaclec family. Heterodimer of subunits A and B; disulfide-linked. In terms of tissue distribution, expressed by the venom gland.

It is found in the secreted. Anticoagulant protein which binds to the gamma-carboxyglutamic acid-domain regions of factors IX (F9) and factor X (F10) in the presence of calcium with a 1 to 1 stoichiometry. The protein is Snaclec coagulation factor IX/factor X-binding protein subunit A of Trimeresurus stejnegeri (Chinese green tree viper).